The chain runs to 543 residues: EH domain-containing protein 2 (543 aa).

2 positions are modified to phosphoserine: Ser-3 and Ser-44. Positions 55–286 constitute a Dynamin-type G domain; that stretch reads FDGKPMVLVA…DLFRDIQGLP (232 aa). Residues 65–72 form a G1 motif region; that stretch reads GQYSTGKT. 65-72 is an ATP binding site; the sequence is GQYSTGKT. Residues 91–92 are G2 motif; the sequence is EP. The G3 motif stretch occupies residues 153–156; that stretch reads DTPG. Positions 219–222 are G4 motif; sequence NKAD. Residue Lys-220 coordinates ATP. A region of interest (G5 motif) is located at residue Val-243. An ATP-binding site is contributed by Trp-258. The interval 320–340 is mediates membrane-binding; sequence TVFGKENKKKQLILKLPVIFA. Residues Ser-438, Ser-468, Ser-470, Ser-484, and Ser-493 each carry the phosphoserine modification. The 89-residue stretch at 449-537 folds into the EH domain; sequence DKSKYDEIFY…RRLVPPSKRR (89 aa). In terms of domain architecture, EF-hand spans 481 to 516; sequence LPNSVLGRIWKLSDVDRDGMLDDEEFALASHLIEAK. Residues Asp-494, Asp-496, Asp-498, Met-500, and Glu-505 each contribute to the Ca(2+) site. Residues 521-543 form a disordered region; it reads GLPTNLPRRLVPPSKRRQKGSAE. The segment covering 534-543 has biased composition (basic residues); the sequence is SKRRQKGSAE.

This sequence belongs to the TRAFAC class dynamin-like GTPase superfamily. Dynamin/Fzo/YdjA family. EHD subfamily. As to quaternary structure, homodimer and homooligomer. Interacts with EHD1. May also interact with EHD3 and EHD4. Interacts with MYOF. Interacts with EHBP1. Interacts with FER1L5 (via second C2 domain). Interacts with CAV1 in a cholesterol-dependent manner. Interacts (via EH domain) with PACSIN2 (via NPF motifs); this interaction probably stabilizes the caveolae. Detected in lung and adipocytes. Detected at lower levels in heart and skeletal muscle.

The protein resides in the cell membrane. It localises to the membrane. The protein localises to the caveola. Its subcellular location is the endosome membrane. It is found in the cytoplasm. The protein resides in the cytosol. The very low intrinsic ATPase activity is increased upon interaction with liposomes. Its function is as follows. ATP- and membrane-binding protein that controls membrane reorganization/tubulation upon ATP hydrolysis. Plays a role in membrane trafficking between the plasma membrane and endosomes. Important for the internalization of GLUT4. Required for fusion of myoblasts to skeletal muscle myotubes. Required for normal translocation of FER1L5 to the plasma membrane. Regulates the equilibrium between cell surface-associated and cell surface-dissociated caveolae by constraining caveolae at the cell membrane. This chain is EH domain-containing protein 2, found in Mus musculus (Mouse).